Reading from the N-terminus, the 710-residue chain is NAD(P)H-quinone oxidoreductase subunit 5, chloroplastic (710 aa).

A run of 17 helical transmembrane segments spans residues 9-29 (WIIP…LLIF), 40-60 (WSFQ…YLSI), 89-109 (IDPL…LVLI), 125-145 (FTYM…SNFI), 147-167 (IYIF…FWFT), 185-205 (GDFG…SFEF), 221-241 (VNLL…IAKS), 258-278 (TPIS…FLVA), 280-300 (LLPL…IGII), 327-347 (LGYM…FHLI), 354-374 (ALLF…IGYS), 396-416 (GAFL…CFWS), 425-445 (WLYS…TAFY), 519-539 (MLFP…LGIP), 571-591 (FLKH…IAFL), 657-676 (SFDL…LSFI), and 689-709 (IPFY…LFYK).

It belongs to the complex I subunit 5 family. NDH is composed of at least 16 different subunits, 5 of which are encoded in the nucleus.

It is found in the plastid. It localises to the chloroplast thylakoid membrane. It catalyses the reaction a plastoquinone + NADH + (n+1) H(+)(in) = a plastoquinol + NAD(+) + n H(+)(out). The enzyme catalyses a plastoquinone + NADPH + (n+1) H(+)(in) = a plastoquinol + NADP(+) + n H(+)(out). In terms of biological role, NDH shuttles electrons from NAD(P)H:plastoquinone, via FMN and iron-sulfur (Fe-S) centers, to quinones in the photosynthetic chain and possibly in a chloroplast respiratory chain. The immediate electron acceptor for the enzyme in this species is believed to be plastoquinone. Couples the redox reaction to proton translocation, and thus conserves the redox energy in a proton gradient. The protein is NAD(P)H-quinone oxidoreductase subunit 5, chloroplastic (ndhF) of Ipomoea purpurea (Common morning glory).